We begin with the raw amino-acid sequence, 108 residues long: ATP synthase subunit H, mitochondrial (108 aa).

The N-terminal 19 residues, 1–19, are a transit peptide targeting the mitochondrion; it reads MFTLRAASRRAFSTSIARR. 2 disordered regions span residues 40 to 60 and 75 to 108; these read AKDAEGQVKPWSAPSAPKPPV and APVDVEGQTNSKSASPQANDEDWLAFEEEEGVAV. The segment covering 47-60 has biased composition (low complexity); that stretch reads VKPWSAPSAPKPPV. The segment covering 81 to 92 has biased composition (polar residues); sequence GQTNSKSASPQA. A compositionally biased stretch (acidic residues) spans 93 to 108; it reads NDEDWLAFEEEEGVAV.

As to quaternary structure, F-type ATP synthases have 2 components, the catalytic core F(1) and the membrane-embedded component F(0), linked together by a central stalk and a peripheral stalk. The central stalk, also called rotor shaft, is often seen as part of F(1). The peripheral stalk is seen as part of F(0). F(0) contains the membrane channel next to the rotor. F-type ATP synthases form dimers but each monomer functions independently in ATP generation. The dimer consists of 17 different polypeptides: ATP1 (subunit alpha, 3 molecules per monomer, part of F(1)), ATP2 (subunit beta, 3 copies per monomer, part of F(1)), ATP3 (subunit gamma, part of the central stalk), ATP4 (subunit b, part of the peripheral stalk), ATP5/OSCP (subunit 5/OSCP, part of the peripheral stalk), ATP6 (subunit a, part of the peripheral stalk), ATP7 (subunit d, part of the peripheral stalk), ATP8 (subunit 8, part of the peripheral stalk), OLI1 (subunit c, part of the rotor, 10 molecules per monomer), ATP14 (subunit H, part of the peripheral stalk), ATP15 (subunit epsilon, part of the central stalk), ATP16 (subunit delta, part of the central stalk), ATP17 (subunit f, part of the peripheral stalk), ATP18 (subunit i/j, part of the peripheral stalk), ATP19 (subunit k, dimer-specific, at interface between monomers), ATP20 (subunit g, at interface between monomers), TIM11 (subunit e, at interface between monomers).

It localises to the mitochondrion inner membrane. Mitochondrial membrane ATP synthase (F(1)F(0) ATP synthase or Complex V) produces ATP from ADP in the presence of a proton gradient across the membrane which is generated by electron transport complexes of the respiratory chain. F-type ATP synthases consist of two structural domains, F(1) - containing the extramembraneous catalytic core, and F(0) - containing the membrane proton channel, linked together by a central stalk and a peripheral stalk. During catalysis, ATP synthesis in the catalytic domain of F(1) is coupled via a rotary mechanism of the central stalk subunits to proton translocation. Part of the peripheral stalk. The chain is ATP synthase subunit H, mitochondrial from Yarrowia lipolytica (strain CLIB 122 / E 150) (Yeast).